A 152-amino-acid polypeptide reads, in one-letter code: MAGHTENEITIAAPVDLVWDMTNDLERWPELFSEYASCEVLSREANTVTFRLTMHPDENGKVWSWVSERTADREKLVVRARRVETGPFEYMNIVWEYEETPDGTRMHWTQDFAMKPDAPVDDAGMTDIINRNSPIQMALIRDRIEEVSCTTP.

It to polyketide cyclases.

The protein operates within antibiotic biosynthesis; curamycin biosynthesis. This Streptomyces cyaneus (Streptomyces curacoi) protein is Putative polyketide cyclase (curF).